The following is a 593-amino-acid chain: Pyruvate decarboxylase 1 (593 aa).

Residues 1–19 are compositionally biased toward polar residues; the sequence is METETETPNGSTPCPTSAP. The disordered stretch occupies residues 1 to 20; that stretch reads METETETPNGSTPCPTSAPS. 2 residues coordinate substrate: Asp55 and His142. The thiamine pyrophosphate binding stretch occupies residues 420–502; it reads DSWFNCQKLR…FLINNGGYTI (83 aa). Mg(2+)-binding residues include Asp470, Asn497, and Gly499. Residue Glu503 participates in substrate binding.

This sequence belongs to the TPP enzyme family. As to quaternary structure, homotetramer. It depends on a metal cation as a cofactor. Thiamine diphosphate is required as a cofactor.

It carries out the reaction a 2-oxocarboxylate + H(+) = an aldehyde + CO2. This Pisum sativum (Garden pea) protein is Pyruvate decarboxylase 1 (PDC1).